We begin with the raw amino-acid sequence, 510 residues long: Bifunctional purine biosynthesis protein PurH (510 aa).

Residues Met1 to Cys142 form the MGS-like domain.

It belongs to the PurH family.

The enzyme catalyses (6R)-10-formyltetrahydrofolate + 5-amino-1-(5-phospho-beta-D-ribosyl)imidazole-4-carboxamide = 5-formamido-1-(5-phospho-D-ribosyl)imidazole-4-carboxamide + (6S)-5,6,7,8-tetrahydrofolate. It carries out the reaction IMP + H2O = 5-formamido-1-(5-phospho-D-ribosyl)imidazole-4-carboxamide. Its pathway is purine metabolism; IMP biosynthesis via de novo pathway; 5-formamido-1-(5-phospho-D-ribosyl)imidazole-4-carboxamide from 5-amino-1-(5-phospho-D-ribosyl)imidazole-4-carboxamide (10-formyl THF route): step 1/1. It functions in the pathway purine metabolism; IMP biosynthesis via de novo pathway; IMP from 5-formamido-1-(5-phospho-D-ribosyl)imidazole-4-carboxamide: step 1/1. This Campylobacter jejuni subsp. doylei (strain ATCC BAA-1458 / RM4099 / 269.97) protein is Bifunctional purine biosynthesis protein PurH.